Here is a 325-residue protein sequence, read N- to C-terminus: D-alanine--D-alanine ligase (325 aa).

In terms of domain architecture, ATP-grasp spans 102-300 (KQIFRAAGIP…FTELVERMLQ (199 aa)). Residue 130–185 (AAELGSPLVIKPSNNGSTVGISIVRDERSFAQGLELARSVSSRIFLERYVPGKEIT) coordinates ATP. Mg(2+) contacts are provided by aspartate 254, glutamate 267, and asparagine 269.

This sequence belongs to the D-alanine--D-alanine ligase family. Requires Mg(2+) as cofactor. It depends on Mn(2+) as a cofactor.

Its subcellular location is the cytoplasm. It catalyses the reaction 2 D-alanine + ATP = D-alanyl-D-alanine + ADP + phosphate + H(+). Its pathway is cell wall biogenesis; peptidoglycan biosynthesis. Functionally, cell wall formation. This chain is D-alanine--D-alanine ligase, found in Synechococcus sp. (strain JA-2-3B'a(2-13)) (Cyanobacteria bacterium Yellowstone B-Prime).